We begin with the raw amino-acid sequence, 149 residues long: MVDSLTEEQIAEFKEAFSLFDKDGDGNITTKELGTVMRSLGQNPTEAELQDMINEVDADGNGTIDFPEFLTMMARKMADTDTEEEIREAFKVFDKDGNGFISAAELRHVMTNLGEKLSDEEVDEMIREADVDGDGQVNYDEFVKMMLSK.

4 EF-hand domains span residues 8–43, 44–79, 81–116, and 117–149; these read EQIA…LGQN, PTEA…KMAD, DTEE…LGEK, and LSDE…MLSK. Asp21, Asp23, Asp25, Asn27, Glu32, Asp57, Asp59, Asn61, Thr63, Glu68, Asp94, Asp96, Asn98, and Glu105 together coordinate Ca(2+). Lys116 carries the N6,N6,N6-trimethyllysine modification. The Ca(2+) site is built by Asp130, Asp132, Asp134, Gln136, and Glu141.

Belongs to the calmodulin family.

In terms of biological role, calmodulin mediates the control of a large number of enzymes, ion channels and other proteins by Ca(2+). Among the enzymes to be stimulated by the calmodulin-Ca(2+) complex are a number of protein kinases and phosphatases. This Physarum polycephalum (Slime mold) protein is Calmodulin.